Consider the following 240-residue polypeptide: UDP-2,3-diacylglucosamine hydrolase (240 aa).

5 residues coordinate Mn(2+): Asp8, His10, Asp41, Asn78, and His113. Residue 78-79 (NR) coordinates substrate. Positions 121, 159, 163, 166, and 194 each coordinate substrate. Mn(2+) contacts are provided by His194 and His196.

The protein belongs to the LpxH family. Requires Mn(2+) as cofactor.

It is found in the cell inner membrane. The enzyme catalyses UDP-2-N,3-O-bis[(3R)-3-hydroxytetradecanoyl]-alpha-D-glucosamine + H2O = 2-N,3-O-bis[(3R)-3-hydroxytetradecanoyl]-alpha-D-glucosaminyl 1-phosphate + UMP + 2 H(+). Its pathway is glycolipid biosynthesis; lipid IV(A) biosynthesis; lipid IV(A) from (3R)-3-hydroxytetradecanoyl-[acyl-carrier-protein] and UDP-N-acetyl-alpha-D-glucosamine: step 4/6. Hydrolyzes the pyrophosphate bond of UDP-2,3-diacylglucosamine to yield 2,3-diacylglucosamine 1-phosphate (lipid X) and UMP by catalyzing the attack of water at the alpha-P atom. Involved in the biosynthesis of lipid A, a phosphorylated glycolipid that anchors the lipopolysaccharide to the outer membrane of the cell. This chain is UDP-2,3-diacylglucosamine hydrolase, found in Shewanella baltica (strain OS185).